A 239-amino-acid polypeptide reads, in one-letter code: Fatty acid metabolism regulator protein (239 aa).

The HTH gntR-type domain maps to 6-74; sequence QSPAGFAEEY…HGKPTKVNNF (69 aa). The H-T-H motif DNA-binding region spans 34–53; that stretch reads ERELSELIGVTRTTLREVLQ.

Homodimer.

The protein localises to the cytoplasm. Its function is as follows. Multifunctional regulator of fatty acid metabolism. The protein is Fatty acid metabolism regulator protein of Cronobacter sakazakii (strain ATCC BAA-894) (Enterobacter sakazakii).